Here is a 741-residue protein sequence, read N- to C-terminus: Lamin-B receptor (741 aa).

The interval 29–126 (RLRRPRRTED…TGSGSGSSLP (98 aa)) is disordered. 2 stretches are compositionally biased toward low complexity: residues 57–84 (TRRT…RTRA) and 109–126 (PRSS…SSLP). S111 is subject to Phosphoserine. T135 is subject to Phosphothreonine. S144 carries the phosphoserine modification. Over residues 160–184 (TNTSSGAPNKAFNTSSVNSGNSFSR) the composition is skewed to polar residues. A disordered region spans residues 160–194 (TNTSSGAPNKAFNTSSVNSGNSFSRTTTSSTTTTT). Residues 185–194 (TTTSSTTTTT) show a composition bias toward low complexity. S223 and S225 each carry phosphoserine. A compositionally biased stretch (polar residues) spans 231 to 240 (LAGTPVTNTE). The tract at residues 231 to 277 (LAGTPVTNTEEGSRYSRSVSRSVYDDEKSSKRSYSTGEEDIDEEDEL) is disordered. A phosphothreonine mark is found at T234 and T237. 5 positions are modified to phosphoserine: S243, S246, S248, S250, and S263. The residue at position 266 (T266) is a Phosphothreonine. Residues 267–277 (GEEDIDEEDEL) are compositionally biased toward acidic residues. The residue at position 284 (S284) is a Phosphoserine. Position 288 is a phosphothreonine (T288). A Phosphoserine modification is found at S291. A Phosphothreonine modification is found at T293. A Phosphoserine modification is found at S298. A run of 8 helical transmembrane segments spans residues 308–328 (FGGW…VYYL), 363–383 (VVGA…LLPG), 402–422 (LTLL…VTFV), 429–449 (FCIF…WLVD), 497–517 (LSLV…LVWP), 543–563 (PATL…IIFE), 577–599 (YGCL…TKYF), and 604–624 (VPIS…LGLL). A phosphoserine mark is found at S640 and S642. A helical membrane pass occupies residues 687 to 707 (MALRPAWPPVLGLSLIILLLL).

Belongs to the ERG4/ERG24 family. Interacts directly with LAM.

The protein localises to the nucleus inner membrane. Anchors the lamina and the heterochromatin to the inner nuclear membrane. In Drosophila melanogaster (Fruit fly), this protein is Lamin-B receptor.